Consider the following 344-residue polypeptide: Gibberellin receptor GID1C (344 aa).

A2 carries the post-translational modification N-acetylalanine. An Involved in the stabilization of the negatively charged intermediate by the formation of the oxyanion hole motif is present at residues 111–113 (HGG). Residues 113–114 (GS), Y125, and S189 contribute to the gibberellin A4 site. Gibberellin A3 contacts are provided by S114, Y125, S189, and F236. The active site involves S189. D287 is an active-site residue. Residue G318 participates in gibberellin A4 binding. G318 is a gibberellin A3 binding site.

This sequence belongs to the 'GDXG' lipolytic enzyme family. In terms of assembly, interacts with the DELLA proteins GAI, RGA, RGL1, RGL2 and RGL3 in a GA-dependent manner. As to expression, widely expressed.

It localises to the nucleus. Its function is as follows. Functions as a soluble gibberellin (GA) receptor. GA is an essential hormone that regulates growth and development in plants. Binds with high affinity the biologically active gibberellin GA4, but has no affinity for the biologically inactive GAs. In response to GA, interacts with specific DELLA proteins, known as repressors of GA-induced growth, and targets them for degradation via proteasome. Seems to be required for GA signaling that controls root growth, seed germination and stem elongation. Partially redundant with GID1A and GID1B. This is Gibberellin receptor GID1C (GID1C) from Arabidopsis thaliana (Mouse-ear cress).